We begin with the raw amino-acid sequence, 274 residues long: Transcriptional activator PerA (274 aa).

Residues 168–265 (DRVIKVIELD…NTTPKKYNGV (98 aa)) form the HTH araC/xylS-type domain. 2 consecutive DNA-binding regions (H-T-H motif) follow at residues 185-206 (GDVSSSMFMSDSCLRKQLNKEN) and 232-255 (IDEISCLVGFNSTSYFIKVFKEYY).

Functionally, could help in the transcriptional activator of eaeA expression in enteropathogenic E.coli. However, it seems that it is PerC which acts as an activator. The protein is Transcriptional activator PerA (perA) of Escherichia coli O127:H6 (strain E2348/69 / EPEC).